A 396-amino-acid chain; its full sequence is Dimethyladenosine transferase 2, mitochondrial (396 aa).

The transit peptide at 1-43 directs the protein to the mitochondrion; sequence MRGPAMRLPPRIALSALARGPSCILGSGAATRKDWQTRNRRGF. The segment at 43 to 71 is disordered; sequence FSDFNIEPLPDSDLEESSPWTSRNRSEPT. Ile-74, Glu-123, and Asp-149 together coordinate S-adenosyl-L-methionine. Residues 328-329 are DNA-binding; it reads KR.

This sequence belongs to the class I-like SAM-binding methyltransferase superfamily. rRNA adenine N(6)-methyltransferase family. KsgA subfamily. Homodimer. Component of the mitochondrial transcription initiation complex, composed at least of TFB2M, TFAM and POLRMT. In this complex TFAM recruits POLRMT to the promoter whereas TFB2M induces structural changes in POLRMT to enable promoter opening and trapping of the DNA non-template strand. Interacts with mitochondrial RNA polymerase POLRMT. Interacts with TFAM. As to expression, ubiquitously expressed.

The protein localises to the mitochondrion. It carries out the reaction adenosine in rRNA + S-adenosyl-L-methionine = N(6)-methyladenosine in rRNA + S-adenosyl-L-homocysteine + H(+). Functionally, S-adenosyl-L-methionine-dependent rRNA methyltransferase which may methylate two specific adjacent adenosines in the loop of a conserved hairpin near the 3'-end of 12S mitochondrial rRNA. Component of the mitochondrial transcription initiation complex, composed at least of TFB2M, TFAM and POLRMT that is required for basal transcription of mitochondrial DNA. In this complex, TFAM recruits POLRMT to a specific promoter whereas TFB2M induces structural changes in POLRMT to enable promoter opening and trapping of the DNA non-template strand. Stimulates transcription independently of the methyltransferase activity. The sequence is that of Dimethyladenosine transferase 2, mitochondrial from Mus musculus (Mouse).